A 488-amino-acid polypeptide reads, in one-letter code: Aspartyl/glutamyl-tRNA(Asn/Gln) amidotransferase subunit B (488 aa).

It belongs to the GatB/GatE family. GatB subfamily. Heterotrimer of A, B and C subunits.

It carries out the reaction L-glutamyl-tRNA(Gln) + L-glutamine + ATP + H2O = L-glutaminyl-tRNA(Gln) + L-glutamate + ADP + phosphate + H(+). The enzyme catalyses L-aspartyl-tRNA(Asn) + L-glutamine + ATP + H2O = L-asparaginyl-tRNA(Asn) + L-glutamate + ADP + phosphate + 2 H(+). Allows the formation of correctly charged Asn-tRNA(Asn) or Gln-tRNA(Gln) through the transamidation of misacylated Asp-tRNA(Asn) or Glu-tRNA(Gln) in organisms which lack either or both of asparaginyl-tRNA or glutaminyl-tRNA synthetases. The reaction takes place in the presence of glutamine and ATP through an activated phospho-Asp-tRNA(Asn) or phospho-Glu-tRNA(Gln). This is Aspartyl/glutamyl-tRNA(Asn/Gln) amidotransferase subunit B from Ralstonia nicotianae (strain ATCC BAA-1114 / GMI1000) (Ralstonia solanacearum).